The sequence spans 323 residues: MVTILDTINPDAKRVRHPEKAHRPDTEVMRKPDWIRVKAPTSKGYAETRAIVKEHKLVTVCEEAGCPNIGECWDKKHATFMIMGEICTRACAFCNVATGKPNALDMAEPENVAKAVKEMGLSHVVITSVDRDDLEDGGAEHFEKVIWAIRAASPATTIEILTPDFLKKPGALERVVAAKPDVFNHNMETVAGNYLTVRPGARYFHSIRLLQRVKELDPTMFTKSGIMVGLGEERNEVLQLMDDLRTADVDFLTIGQYLQPTRKHHKVESFVTPDEFKSYETVAYSKGFLMVASSPLTRSSHHAGDDFARLRAAREKKLLVAAE.

The [4Fe-4S] cluster site is built by Cys-61, Cys-66, Cys-72, Cys-87, Cys-91, Cys-94, and Ser-300. One can recognise a Radical SAM core domain in the interval 73–289 (WDKKHATFMI…ETVAYSKGFL (217 aa)).

It belongs to the radical SAM superfamily. Lipoyl synthase family. [4Fe-4S] cluster is required as a cofactor.

It localises to the cytoplasm. It catalyses the reaction [[Fe-S] cluster scaffold protein carrying a second [4Fe-4S](2+) cluster] + N(6)-octanoyl-L-lysyl-[protein] + 2 oxidized [2Fe-2S]-[ferredoxin] + 2 S-adenosyl-L-methionine + 4 H(+) = [[Fe-S] cluster scaffold protein] + N(6)-[(R)-dihydrolipoyl]-L-lysyl-[protein] + 4 Fe(3+) + 2 hydrogen sulfide + 2 5'-deoxyadenosine + 2 L-methionine + 2 reduced [2Fe-2S]-[ferredoxin]. The protein operates within protein modification; protein lipoylation via endogenous pathway; protein N(6)-(lipoyl)lysine from octanoyl-[acyl-carrier-protein]: step 2/2. Its function is as follows. Catalyzes the radical-mediated insertion of two sulfur atoms into the C-6 and C-8 positions of the octanoyl moiety bound to the lipoyl domains of lipoate-dependent enzymes, thereby converting the octanoylated domains into lipoylated derivatives. The protein is Lipoyl synthase of Rhizobium etli (strain CIAT 652).